The chain runs to 371 residues: Lipoyl synthase, mitochondrial (371 aa).

The transit peptide at 1–24 (MLSRFKCSRLQLQKRAISVTKATT) directs the protein to the mitochondrion. Residues 20–29 (TKATTTTASQ) are compositionally biased toward polar residues. Residues 20–42 (TKATTTTASQPKRRRTTTFSDAL) form a disordered region. Residues cysteine 107, cysteine 112, cysteine 118, cysteine 138, cysteine 142, cysteine 145, and serine 353 each contribute to the [4Fe-4S] cluster site. Residues 121–342 (GGDSSKATAT…RDKALELGFL (222 aa)) enclose the Radical SAM core domain.

Belongs to the radical SAM superfamily. Lipoyl synthase family. [4Fe-4S] cluster is required as a cofactor.

The protein localises to the mitochondrion. It carries out the reaction [[Fe-S] cluster scaffold protein carrying a second [4Fe-4S](2+) cluster] + N(6)-octanoyl-L-lysyl-[protein] + 2 oxidized [2Fe-2S]-[ferredoxin] + 2 S-adenosyl-L-methionine + 4 H(+) = [[Fe-S] cluster scaffold protein] + N(6)-[(R)-dihydrolipoyl]-L-lysyl-[protein] + 4 Fe(3+) + 2 hydrogen sulfide + 2 5'-deoxyadenosine + 2 L-methionine + 2 reduced [2Fe-2S]-[ferredoxin]. Its pathway is protein modification; protein lipoylation via endogenous pathway; protein N(6)-(lipoyl)lysine from octanoyl-[acyl-carrier-protein]: step 2/2. In terms of biological role, catalyzes the radical-mediated insertion of two sulfur atoms into the C-6 and C-8 positions of the octanoyl moiety bound to the lipoyl domains of lipoate-dependent enzymes, thereby converting the octanoylated domains into lipoylated derivatives. The polypeptide is Lipoyl synthase, mitochondrial (Lachancea thermotolerans (strain ATCC 56472 / CBS 6340 / NRRL Y-8284) (Yeast)).